We begin with the raw amino-acid sequence, 324 residues long: Methenyltetrahydromethanopterin cyclohydrolase (324 aa).

The protein belongs to the MCH family.

The protein localises to the cytoplasm. It catalyses the reaction 5,10-methenyl-5,6,7,8-tetrahydromethanopterin + H2O = N(5)-formyl-5,6,7,8-tetrahydromethanopterin + H(+). Its pathway is one-carbon metabolism; formaldehyde degradation; formate from formaldehyde (H(4)MPT route): step 3/5. Its function is as follows. Catalyzes the hydrolysis of methenyl-H(4)MPT(+) to 5-formyl-H(4)MPT. In Methylobacterium sp. (strain 4-46), this protein is Methenyltetrahydromethanopterin cyclohydrolase.